The following is a 1010-amino-acid chain: Protein translocase subunit SecA (1010 aa).

ATP contacts are provided by residues Q86, 104–108, and D535; that span reads GEGKT. A compositionally biased stretch (low complexity) spans 893–904; it reads QAGAADGNAKGA. Residues 893-916 form a disordered region; the sequence is QAGAADGNAKGARTVRHSVRLPGR. Positions 920, 922, 931, and 932 each coordinate Zn(2+). A compositionally biased stretch (low complexity) spans 950–981; it reads QHAAVAADTPAQPAPQATATRPPTSQVPRGRA. Positions 950–1010 are disordered; that stretch reads QHAAVAADTP…RGKGASARKK (61 aa).

Belongs to the SecA family. In terms of assembly, monomer and homodimer. Part of the essential Sec protein translocation apparatus which comprises SecA, SecYEG and auxiliary proteins SecDF. Other proteins may also be involved. Zn(2+) serves as cofactor.

It localises to the cell membrane. The protein resides in the cytoplasm. It carries out the reaction ATP + H2O + cellular proteinSide 1 = ADP + phosphate + cellular proteinSide 2.. Functionally, part of the Sec protein translocase complex. Interacts with the SecYEG preprotein conducting channel. Has a central role in coupling the hydrolysis of ATP to the transfer of proteins into and across the cell membrane, serving as an ATP-driven molecular motor driving the stepwise translocation of polypeptide chains across the membrane. The polypeptide is Protein translocase subunit SecA (Roseiflexus sp. (strain RS-1)).